The sequence spans 626 residues: Polyphenol oxidase C, chloroplastic (626 aa).

The N-terminal 83 residues, 1–83 (MASLCSNSST…ANAIPLAASA (83 aa)), are a transit peptide targeting the chloroplast. 2 disulfide bridges follow: Cys94-Cys110 and Cys109-Cys177. Positions 176, 194, 203, 324, 328, and 366 each coordinate Cu cation. The segment at residues 180–194 (CNGGYSIDGKVLQVH) is a cross-link (2'-(S-cysteinyl)-histidine (Cys-His)).

Belongs to the tyrosinase family. Cu(2+) serves as cofactor.

It localises to the plastid. The protein localises to the chloroplast thylakoid lumen. It carries out the reaction 2 catechol + O2 = 2 1,2-benzoquinone + 2 H2O. In terms of biological role, catalyzes the oxidation of mono- and o-diphenols to o-diquinones. This Solanum lycopersicum (Tomato) protein is Polyphenol oxidase C, chloroplastic.